The following is a 273-amino-acid chain: 3-methyl-2-oxobutanoate hydroxymethyltransferase (273 aa).

2 residues coordinate Mg(2+): aspartate 53 and aspartate 92. Residues 53-54 (DS), aspartate 92, and lysine 122 each bind 3-methyl-2-oxobutanoate. Glutamate 124 lines the Mg(2+) pocket. The Proton acceptor role is filled by glutamate 191.

It belongs to the PanB family. Homodecamer; pentamer of dimers. Requires Mg(2+) as cofactor.

The protein localises to the cytoplasm. It catalyses the reaction 3-methyl-2-oxobutanoate + (6R)-5,10-methylene-5,6,7,8-tetrahydrofolate + H2O = 2-dehydropantoate + (6S)-5,6,7,8-tetrahydrofolate. Its pathway is cofactor biosynthesis; (R)-pantothenate biosynthesis; (R)-pantoate from 3-methyl-2-oxobutanoate: step 1/2. Catalyzes the reversible reaction in which hydroxymethyl group from 5,10-methylenetetrahydrofolate is transferred onto alpha-ketoisovalerate to form ketopantoate. The protein is 3-methyl-2-oxobutanoate hydroxymethyltransferase of Bacteroides thetaiotaomicron (strain ATCC 29148 / DSM 2079 / JCM 5827 / CCUG 10774 / NCTC 10582 / VPI-5482 / E50).